We begin with the raw amino-acid sequence, 514 residues long: ATP synthase subunit alpha (514 aa).

170–177 provides a ligand contact to ATP; that stretch reads GDRQTGKT.

The protein belongs to the ATPase alpha/beta chains family. As to quaternary structure, F-type ATPases have 2 components, CF(1) - the catalytic core - and CF(0) - the membrane proton channel. CF(1) has five subunits: alpha(3), beta(3), gamma(1), delta(1), epsilon(1). CF(0) has three main subunits: a(1), b(2) and c(9-12). The alpha and beta chains form an alternating ring which encloses part of the gamma chain. CF(1) is attached to CF(0) by a central stalk formed by the gamma and epsilon chains, while a peripheral stalk is formed by the delta and b chains.

It localises to the cell inner membrane. It catalyses the reaction ATP + H2O + 4 H(+)(in) = ADP + phosphate + 5 H(+)(out). Its function is as follows. Produces ATP from ADP in the presence of a proton gradient across the membrane. The alpha chain is a regulatory subunit. This is ATP synthase subunit alpha from Acinetobacter baumannii (strain AB307-0294).